We begin with the raw amino-acid sequence, 261 residues long: Tryptophan synthase alpha chain (261 aa).

Active-site proton acceptor residues include glutamate 49 and aspartate 60.

Belongs to the TrpA family. As to quaternary structure, tetramer of two alpha and two beta chains.

It catalyses the reaction (1S,2R)-1-C-(indol-3-yl)glycerol 3-phosphate + L-serine = D-glyceraldehyde 3-phosphate + L-tryptophan + H2O. Its pathway is amino-acid biosynthesis; L-tryptophan biosynthesis; L-tryptophan from chorismate: step 5/5. Its function is as follows. The alpha subunit is responsible for the aldol cleavage of indoleglycerol phosphate to indole and glyceraldehyde 3-phosphate. This Roseiflexus castenholzii (strain DSM 13941 / HLO8) protein is Tryptophan synthase alpha chain.